Reading from the N-terminus, the 205-residue chain is Meiotic nuclear division protein 1 homolog (205 aa).

A coiled-coil region spans residues 79 to 147 (LHARKRKLET…CADLEKYKEC (69 aa)).

The protein belongs to the MND1 family.

The protein localises to the nucleus. Required for proper homologous chromosome pairing and efficient cross-over and intragenic recombination during meiosis. Stimulates both dmc1- and rad51-mediated homologous strand assimilation, which is required for the resolution of meiotic double-strand breaks. The chain is Meiotic nuclear division protein 1 homolog from Xenopus laevis (African clawed frog).